The primary structure comprises 115 residues: Cytochrome c (115 aa).

Residues cysteine 26, cysteine 29, histidine 30, and methionine 91 each contribute to the heme c site.

This sequence belongs to the cytochrome c family. Post-translationally, binds 1 heme c group covalently per subunit.

The protein localises to the mitochondrion intermembrane space. Electron carrier protein. The oxidized form of the cytochrome c heme group can accept an electron from the heme group of the cytochrome c1 subunit of cytochrome reductase. Cytochrome c then transfers this electron to the cytochrome oxidase complex, the final protein carrier in the mitochondrial electron-transport chain. The polypeptide is Cytochrome c (Theileria parva (East coast fever infection agent)).